Reading from the N-terminus, the 240-residue chain is HTH-type transcriptional repressor STM4068 (240 aa).

Positions threonine 9–valine 77 constitute an HTH gntR-type domain. Residues glutamine 37–serine 56 constitute a DNA-binding region (H-T-H motif).

In terms of biological role, represses the expression of the STM4065-STM4067 operon. In Salmonella typhimurium (strain LT2 / SGSC1412 / ATCC 700720), this protein is HTH-type transcriptional repressor STM4068.